We begin with the raw amino-acid sequence, 246 residues long: tRNA (guanine-N(7)-)-methyltransferase (246 aa).

The segment at 1–23 (MIESSSPTPPALHEGAPADVSHP) is disordered. S-adenosyl-L-methionine contacts are provided by glutamate 75, glutamate 100, aspartate 127, and aspartate 150. Residue aspartate 150 is part of the active site. Residue lysine 154 participates in substrate binding. The interaction with RNA stretch occupies residues 156–161 (KHNKRR). Residues aspartate 186 and 225-228 (TKFE) contribute to the substrate site.

The protein belongs to the class I-like SAM-binding methyltransferase superfamily. TrmB family.

The enzyme catalyses guanosine(46) in tRNA + S-adenosyl-L-methionine = N(7)-methylguanosine(46) in tRNA + S-adenosyl-L-homocysteine. The protein operates within tRNA modification; N(7)-methylguanine-tRNA biosynthesis. In terms of biological role, catalyzes the formation of N(7)-methylguanine at position 46 (m7G46) in tRNA. This chain is tRNA (guanine-N(7)-)-methyltransferase, found in Polaromonas naphthalenivorans (strain CJ2).